The sequence spans 385 residues: Putative RNA methyltransferase YpsC (385 aa).

The 113-residue stretch at 44–156 (AICRANLWLR…KDQALITLDS (113 aa)) folds into the THUMP domain.

This sequence belongs to the methyltransferase superfamily. Interacts with the RNA polymerase core.

The polypeptide is Putative RNA methyltransferase YpsC (ypsC) (Bacillus subtilis (strain 168)).